A 105-amino-acid chain; its full sequence is Large ribosomal subunit protein uL24 (105 aa).

It belongs to the universal ribosomal protein uL24 family. Part of the 50S ribosomal subunit.

In terms of biological role, one of two assembly initiator proteins, it binds directly to the 5'-end of the 23S rRNA, where it nucleates assembly of the 50S subunit. Its function is as follows. One of the proteins that surrounds the polypeptide exit tunnel on the outside of the subunit. In Methylocella silvestris (strain DSM 15510 / CIP 108128 / LMG 27833 / NCIMB 13906 / BL2), this protein is Large ribosomal subunit protein uL24.